Consider the following 208-residue polypeptide: Guanylate kinase (208 aa).

The Guanylate kinase-like domain occupies 21-201 (GRVVVLSGPS…ACAELVSLLV (181 aa)). 28 to 35 (GPSAVGKS) is an ATP binding site.

It belongs to the guanylate kinase family.

The protein resides in the cytoplasm. The enzyme catalyses GMP + ATP = GDP + ADP. Its function is as follows. Essential for recycling GMP and indirectly, cGMP. This is Guanylate kinase (gmk) from Mycobacterium bovis (strain ATCC BAA-935 / AF2122/97).